A 318-amino-acid chain; its full sequence is NADH-quinone oxidoreductase subunit H 2 (318 aa).

9 helical membrane-spanning segments follow: residues 4-24, 77-97, 106-126, 146-166, 179-199, 214-234, 238-258, 262-282, and 293-313; these read LLIA…AGVF, LAPA…AFAP, VGVL…VLGA, LAYE…AGSF, LWFI…GLAA, LVAG…FLGE, ILLV…GPIL, IWFG…RAAL, and FAWK…AWIA.

Belongs to the complex I subunit 1 family. In terms of assembly, NDH-1 is composed of 14 different subunits. Subunits NuoA, H, J, K, L, M, N constitute the membrane sector of the complex.

It localises to the cell inner membrane. The catalysed reaction is a quinone + NADH + 5 H(+)(in) = a quinol + NAD(+) + 4 H(+)(out). Its function is as follows. NDH-1 shuttles electrons from NADH, via FMN and iron-sulfur (Fe-S) centers, to quinones in the respiratory chain. The immediate electron acceptor for the enzyme in this species is believed to be ubiquinone. Couples the redox reaction to proton translocation (for every two electrons transferred, four hydrogen ions are translocated across the cytoplasmic membrane), and thus conserves the redox energy in a proton gradient. This subunit may bind ubiquinone. This is NADH-quinone oxidoreductase subunit H 2 from Cereibacter sphaeroides (strain ATCC 17023 / DSM 158 / JCM 6121 / CCUG 31486 / LMG 2827 / NBRC 12203 / NCIMB 8253 / ATH 2.4.1.) (Rhodobacter sphaeroides).